Consider the following 110-residue polypeptide: MLRILNMNEYISLNHYLILSSLVFTIGMFGLFMHRKNIINILMSIELMLLAVNINFVAFSIYMQELSGQIFSIIILTVAAAETSIGLAILLIYFRNKGSIEITDINQMWG.

Helical transmembrane passes span 13-33 (LNHYLILSSLVFTIGMFGLFM), 41-61 (ILMSIELMLLAVNINFVAFSI), and 73-93 (IIILTVAAAETSIGLAILLIY).

The protein belongs to the complex I subunit 4L family. In terms of assembly, NDH-1 is composed of 14 different subunits. Subunits NuoA, H, J, K, L, M, N constitute the membrane sector of the complex.

The protein localises to the cell inner membrane. The catalysed reaction is a quinone + NADH + 5 H(+)(in) = a quinol + NAD(+) + 4 H(+)(out). Its function is as follows. NDH-1 shuttles electrons from NADH, via FMN and iron-sulfur (Fe-S) centers, to quinones in the respiratory chain. The immediate electron acceptor for the enzyme in this species is believed to be ubiquinone. Couples the redox reaction to proton translocation (for every two electrons transferred, four hydrogen ions are translocated across the cytoplasmic membrane), and thus conserves the redox energy in a proton gradient. This is NADH-quinone oxidoreductase subunit K from Rickettsia conorii (strain ATCC VR-613 / Malish 7).